The sequence spans 419 residues: D(4) dopamine receptor (419 aa).

Residues 1–29 (MGNRSTADADGLLAGRGPAAGASAGASAG) lie on the Extracellular side of the membrane. N-linked (GlcNAc...) asparagine glycosylation occurs at N3. Residues 30-50 (LAGQGAAALVGGVLLIGAVLA) form a helical membrane-spanning segment. Residues 51-71 (GNSLVCVSVATERALQTPTNS) are Cytoplasmic-facing. The helical transmembrane segment at 72–92 (FIVSLAAADLLLALLVLPLFV) threads the bilayer. Residue D80 participates in Na(+) binding. Residues 93-110 (YSEVQGGAWLLSPRLCDA) are Extracellular-facing. The cysteines at positions 108 and 185 are disulfide-linked. A helical membrane pass occupies residues 111 to 131 (LMAMDVMLCTASIFNLCAISV). Position 115 (D115) interacts with (2R,3R)-nemonapride. Residue S122 participates in Na(+) binding. Residues 132-152 (DRFVAVAVPLRYNRQGGSRRQ) lie on the Cytoplasmic side of the membrane. The chain crosses the membrane as a helical span at residues 153 to 173 (LLLIGATWLLSAAVAAPVLCG). Over 174 to 192 (LNDVRGRDPAVCRLEDRDY) the chain is Extracellular. Residues 193–213 (VVYSSVCSFFLPCPLMLLLYW) form a helical membrane-spanning segment. S196 lines the (2R,3R)-nemonapride pocket. Residues 214–346 (ATFRGLQRWE…ITGRERKAMR (133 aa)) lie on the Cytoplasmic side of the membrane. Positions 230-264 (LHGRAPRRPSGPGPPSPTPPAPRLPQDPCGPDCAP) are disordered. Over residues 238 to 254 (PSGPGPPSPTPPAPRLP) the composition is skewed to pro residues. The 1; approximate repeat unit spans residues 249–264 (PAPRLPQDPCGPDCAP). The tract at residues 249 to 312 (PAPRLPQDPC…PDPCGSNCAP (64 aa)) is 4 X 16 AA approximate tandem repeats of [PA]-A-P-G-L-P-[PQR]-[DG]-P-C-G-P-D-C-A-P. Tandem repeats lie at residues 265–280 (PAPG…DCAP) and 281–296 (AAPS…DCAP). One copy of the 4; approximate repeat lies at 297 to 312 (PAPGLPPDPCGSNCAP). Residues 317-336 (RAAALPPQTPPQTRRRRRAK) form a disordered region. Residues 347–367 (VLPVVVGAFLLCWTPFFVVHI) traverse the membrane as a helical segment. The Extracellular segment spans residues 368–382 (TQALCPACSVPPRLV). C372 and C375 are oxidised to a cystine. A helical membrane pass occupies residues 383 to 403 (SAVTWLGYVNSALNPVIYTVF). Residues 404 to 419 (NAEFRNVFRKALRACC) are Cytoplasmic-facing. C419 carries S-palmitoyl cysteine lipidation.

Belongs to the G-protein coupled receptor 1 family. Forms homo- and heterooligomers with DRD2. D4.7 allele exhibits higher affinity for homodimers compared to DRD2 heterodimers, while alleles D42. and 4.4 have similar affinities for both. The interaction with DRD2 may modulate agonist-induced downstream signaling. Interacts with CLIC6. Interacts with GPRASP1. May interact with ADORA2A. Interacts with KLHL12. Post-translationally, polyubiquitinated by the BCR(KLHL12) E3 ubiquitin ligase complex: polyubiquitination does not lead to degradation of DRD4 protein. In terms of processing, palmitoylated. Palmitoylation of the C-terminal Cys is important for normal expression at the cell membrane. As to expression, highly expressed in retina. Detected at much lower levels in brain, in amygdala, thalamus, hypothalamus, cerebellum and pituitary.

It localises to the cell membrane. Its activity is regulated as follows. Signaling in response to agonists such as dopamine, epinephrine and norepinephrine is modulated by Na(+); lower Na(+) levels result in higher receptor activity (in vitro). Its function is as follows. Dopamine receptor responsible for neuronal signaling in the mesolimbic system of the brain, an area of the brain that regulates emotion and complex behavior. Activated by dopamine, but also by epinephrine and norepinephrine, and by numerous synthetic agonists and drugs. Agonist binding triggers signaling via G proteins that inhibit adenylyl cyclase. Modulates the circadian rhythm of contrast sensitivity by regulating the rhythmic expression of NPAS2 in the retinal ganglion cells. The protein is D(4) dopamine receptor (DRD4) of Homo sapiens (Human).